A 613-amino-acid chain; its full sequence is Ethylene response sensor 1 (613 aa).

The next 3 helical transmembrane spans lie at 23-43 (ISDA…IYFV), 58-78 (FGAF…MFFM), and 95-115 (AVVS…LLSV). Cu cation is bound by residues C65 and H69. One can recognise a GAF domain in the interval 158–307 (DRHTILRTTL…NVADQVAVAL (150 aa)). In terms of domain architecture, Histidine kinase spans 350–589 (VMNHEMRTPM…SFIIRLGICN (240 aa)). A Phosphohistidine; by autocatalysis modification is found at H353.

It belongs to the ethylene receptor family. In terms of assembly, homodimer; disulfide-linked. Heteromer with ETR1. The cofactor is Cu cation. Post-translationally, autophosphorylated on both His and Ser residues in the presence of manganese. Loss of His autophosphorylation in the presence of both manganese and magnesium. In terms of tissue distribution, expressed in etiolated seedlings, leaves, stems, roots, flowers, embryos, anthers, carpels and ovules.

The protein localises to the endoplasmic reticulum membrane. It catalyses the reaction ATP + protein L-histidine = ADP + protein N-phospho-L-histidine.. Its function is as follows. Ethylene receptor related to bacterial two-component regulators. Acts as a redundant negative regulator of ethylene signaling. The polypeptide is Ethylene response sensor 1 (ERS1) (Arabidopsis thaliana (Mouse-ear cress)).